We begin with the raw amino-acid sequence, 710 residues long: Solute carrier family 15 member 1 (710 aa).

Residues M1 to V21 traverse the membrane as a helical segment. The Extracellular segment spans residues N22–T53. A helical membrane pass occupies residues A54 to A74. Residues D75–K82 are Cytoplasmic-facing. A helical transmembrane segment spans residues T83–I103. Over N104–L118 the chain is Extracellular. Residues P119–I139 traverse the membrane as a helical segment. Residues K140–R161 lie on the Cytoplasmic side of the membrane. The helical transmembrane segment at F162–P182 threads the bilayer. At I183–Y198 the chain is on the extracellular side. A helical transmembrane segment spans residues P199 to G219. Over S220 to Q276 the chain is Cytoplasmic. A helical membrane pass occupies residues I277–F297. Residues D298–T327 lie on the Extracellular side of the membrane. A helical transmembrane segment spans residues V328 to I348. The Cytoplasmic portion of the chain corresponds to A349–M361. A helical membrane pass occupies residues T362 to I382. Residues D383–Q586 lie on the Extracellular side of the membrane. The extracellular domain (ECD) stretch occupies residues D383 to Q586. N-linked (GlcNAc...) asparagine glycosylation is found at N415, N439, N510, N532, and N539. The chain crosses the membrane as a helical span at residues I587–F607. The Cytoplasmic portion of the chain corresponds to S608–Q621. A helical membrane pass occupies residues A622–G642. The Extracellular portion of the chain corresponds to H643 to Q647. A helical transmembrane segment spans residues W648 to M668. The Cytoplasmic segment spans residues A669 to M710. The interval D687–M710 is disordered. The span at P698 to M710 shows a compositional bias: polar residues.

The protein belongs to the major facilitator superfamily. Proton-dependent oligopeptide transporter (POT/PTR) (TC 2.A.17) family. As to quaternary structure, interacts (via extracellular domain region) with trypsin. In terms of tissue distribution, highly expressed in small intestine. Expression is restricted to pinealocytes.

The protein resides in the apical cell membrane. The catalysed reaction is a dipeptide(out) + H(+)(out) = a dipeptide(in) + H(+)(in). It carries out the reaction an L-amino acid tripeptide(out) + H(+)(out) = an L-amino acid tripeptide(in) + H(+)(in). It catalyses the reaction L-alanyl-L-lysine(out) + H(+)(out) = L-alanyl-L-lysine(in) + H(+)(in). The enzyme catalyses L-alanyl-L-proline(out) + H(+)(out) = L-alanyl-L-proline(in) + H(+)(in). The catalysed reaction is L-alanyl-L-valine(out) + H(+)(out) = L-alanyl-L-valine(in) + H(+)(in). It carries out the reaction carnosine(out) + H(+)(out) = carnosine(in) + H(+)(in). It catalyses the reaction glycyl-L-glutamine(out) + H(+)(out) = glycyl-L-glutamine(in) + H(+)(in). The enzyme catalyses glycyl-L-leucine(out) + H(+)(out) = glycyl-L-leucine(in) + H(+)(in). The catalysed reaction is glycyl-L-proline(out) + H(+)(out) = glycyl-L-proline(in) + H(+)(in). It carries out the reaction glycyl-sarcosine(out) + H(+)(out) = glycyl-sarcosine(in) + H(+)(in). It catalyses the reaction L-leucyl-L-leucine(out) + H(+)(out) = L-leucyl-L-leucine(in) + H(+)(in). The enzyme catalyses L-leucyl-L-proline(out) + H(+)(out) = L-leucyl-L-proline(in) + H(+)(in). The catalysed reaction is L-phenylalanyl-L-leucine(out) + H(+)(out) = L-phenylalanyl-L-leucine(in) + H(+)(in). It carries out the reaction L-phenylalanyl-L-phenylalanine(out) + H(+)(out) = L-phenylalanyl-L-phenylalanine(in) + H(+)(in). It catalyses the reaction L-lysyl-glycine(out) + H(+)(out) = L-lysyl-glycine(in) + H(+)(in). The enzyme catalyses L-tyrosylglycine(out) + H(+)(out) = L-tyrosylglycine(in) + H(+)(in). The catalysed reaction is L-alanyl-L-aspartate(out) + 2 H(+)(out) = L-alanyl-L-aspartate(in) + 2 H(+)(in). It carries out the reaction L-aspartyl-glycine(out) + 2 H(+)(out) = L-aspartyl-glycine(in) + 2 H(+)(in). It catalyses the reaction glycyl-L-aspartate(out) + 2 H(+)(out) = glycyl-L-aspartate(in) + 2 H(+)(in). The enzyme catalyses glycyl-L-glutamate(out) + 2 H(+)(out) = glycyl-L-glutamate(in) + 2 H(+)(in). The catalysed reaction is L-alanyl-L-leucyl-L-alanine(out) + H(+)(out) = L-alanyl-L-leucyl-L-alanine(in) + H(+)(in). It carries out the reaction L-alanyl-L-prolylglycine(out) + H(+)(out) = L-alanyl-L-prolylglycine(in) + H(+)(in). It catalyses the reaction glycylglycyl-L-isoleucine(out) + H(+)(out) = glycylglycyl-L-isoleucine(in) + H(+)(in). The enzyme catalyses glycylglycyl-L-proline(out) + H(+)(out) = glycylglycyl-L-proline(in) + H(+)(in). The catalysed reaction is L-methionyl-L-phenylalanyl-L-methionine(out) + H(+)(out) = L-methionyl-L-phenylalanyl-L-methionine(in) + H(+)(in). It carries out the reaction N-acetyl-D-muramoyl-L-alanyl-D-isoglutamine(out) + 2 H(+)(out) = N-acetyl-D-muramoyl-L-alanyl-D-isoglutamine(in) + 2 H(+)(in). It catalyses the reaction N(alpha)-formyl-L-methionyl-L-leucyl-L-phenylalanine(out) + 2 H(+)(out) = N(alpha)-formyl-L-methionyl-L-leucyl-L-phenylalanine(in) + 2 H(+)(in). In terms of biological role, electrogenic proton-coupled amino-acid transporter that transports oligopeptides of 2 to 4 amino acids with a preference for dipeptides. Transports neutral and monovalently charged peptides with a proton to peptide stoichiometry of 1:1 or 2:1. Primarily responsible for the absorption of dietary di- and tripeptides from the small intestinal lumen. Mediates transepithelial transport of muramyl and N-formylated bacterial dipeptides contributing to recognition of pathogenic bacteria by the mucosal immune system. In Rattus norvegicus (Rat), this protein is Solute carrier family 15 member 1 (Slc15a1).